The chain runs to 256 residues: Type III pantothenate kinase (256 aa).

ATP is bound at residue Asp-6–Val-13. Substrate is bound by residues Tyr-100 and Gly-107–Arg-110. Asp-109 serves as the catalytic Proton acceptor. Residue Asp-129 participates in K(+) binding. Thr-132 contributes to the ATP binding site. A substrate-binding site is contributed by Thr-184.

The protein belongs to the type III pantothenate kinase family. As to quaternary structure, homodimer. Requires NH4(+) as cofactor. It depends on K(+) as a cofactor.

It localises to the cytoplasm. The catalysed reaction is (R)-pantothenate + ATP = (R)-4'-phosphopantothenate + ADP + H(+). Its pathway is cofactor biosynthesis; coenzyme A biosynthesis; CoA from (R)-pantothenate: step 1/5. Catalyzes the phosphorylation of pantothenate (Pan), the first step in CoA biosynthesis. In Myxococcus xanthus (strain DK1622), this protein is Type III pantothenate kinase.